The sequence spans 214 residues: Immunoglobulin lambda-like polypeptide 5 (214 aa).

The signal sequence occupies residues 1 to 35 (MRPKTGQVGCETPEELGPGPRQRWPLLLLGLAMVA). The j region stretch occupies residues 98-109 (VFGTGTKVTVLG). Residues 110-214 (QPKANPTVTL…EKTVAPTECS (105 aa)) are c region. The Ig-like C1-type domain occupies 115 to 209 (PTVTLFPPSS…EGSTVEKTVA (95 aa)). An intrachain disulfide couples Cys-136 to Cys-195.

As to expression, contrary to IGLL1, not expressed in pre-B-cells.

The protein resides in the secreted. The polypeptide is Immunoglobulin lambda-like polypeptide 5 (IGLL5) (Homo sapiens (Human)).